Reading from the N-terminus, the 236-residue chain is MDVFAFNASLSMCKDVAGIAGNIFAFGLFVSPMPTFRRIMRNKSTEQFSGLPYIYALLNCLICLWYGTPFISHSNAMLMTVNSVGATFQLCYIILFIMHTDKKNKMKMLGLLFVVFAVVGVIVAGSLQIPDQLTRWYFVGFLSCGSLVSMFASPLFVINLVIRTKSVEFMPFYLSLSTFLMSASFLLYGLFNSDAFVYTPNGIGTILGIVQLALYCYYHRNSIEEETKEPLIVSYV.

Residues 1–15 (MDVFAFNASLSMCKD) are Extracellular-facing. A glycan (N-linked (GlcNAc...) asparagine) is linked at N7. A helical membrane pass occupies residues 16–36 (VAGIAGNIFAFGLFVSPMPTF). Positions 18 to 103 (GIAGNIFAFG…ILFIMHTDKK (86 aa)) constitute a MtN3/slv 1 domain. Residues 37 to 50 (RRIMRNKSTEQFSG) lie on the Cytoplasmic side of the membrane. Residues 51–71 (LPYIYALLNCLICLWYGTPFI) form a helical membrane-spanning segment. Over 72–76 (SHSNA) the chain is Extracellular. Residues 77–97 (MLMTVNSVGATFQLCYIILFI) form a helical membrane-spanning segment. Residues 98–108 (MHTDKKNKMKM) lie on the Cytoplasmic side of the membrane. The helical transmembrane segment at 109 to 129 (LGLLFVVFAVVGVIVAGSLQI) threads the bilayer. The Extracellular portion of the chain corresponds to 130 to 137 (PDQLTRWY). A helical membrane pass occupies residues 138-158 (FVGFLSCGSLVSMFASPLFVI). One can recognise a MtN3/slv 2 domain in the interval 138–221 (FVGFLSCGSL…LALYCYYHRN (84 aa)). Over 159–170 (NLVIRTKSVEFM) the chain is Cytoplasmic. Residues 171-191 (PFYLSLSTFLMSASFLLYGLF) form a helical membrane-spanning segment. Residues 192-194 (NSD) lie on the Extracellular side of the membrane. The helical transmembrane segment at 195–215 (AFVYTPNGIGTILGIVQLALY) threads the bilayer. The Cytoplasmic portion of the chain corresponds to 216–236 (CYYHRNSIEEETKEPLIVSYV).

Belongs to the SWEET sugar transporter family. In terms of assembly, forms heterooligomers with SWEET17.

The protein resides in the cell membrane. In terms of biological role, mediates both low-affinity uptake and efflux of sugar across the plasma membrane. In Arabidopsis thaliana (Mouse-ear cress), this protein is Bidirectional sugar transporter SWEET2.